The following is a 189-amino-acid chain: uncharacterized protein (189 aa).

Positions 31–54 form a coiled coil; sequence KCENIDDLANRYEVSKQEVEKVFK. EF-hand domains lie at 47–82, 83–118, 120–155, and 157–189; these read QEVE…LGID, VSPK…KIKL, TVKA…TVST, and ITVK…CQTV. D60, D62, S64, T66, E71, D96, S98, D100, Q102, E107, D133, N135, E137, and E144 together coordinate Ca(2+).

This is an uncharacterized protein from Caenorhabditis elegans.